Reading from the N-terminus, the 309-residue chain is Homoserine O-succinyltransferase (309 aa).

The active-site Acyl-thioester intermediate is the Cys142. Substrate contacts are provided by Lys163 and Ser192. His235 functions as the Proton acceptor in the catalytic mechanism. Residue Glu237 is part of the active site. Arg249 is a substrate binding site.

Belongs to the MetA family.

The protein resides in the cytoplasm. It catalyses the reaction L-homoserine + succinyl-CoA = O-succinyl-L-homoserine + CoA. It participates in amino-acid biosynthesis; L-methionine biosynthesis via de novo pathway; O-succinyl-L-homoserine from L-homoserine: step 1/1. Transfers a succinyl group from succinyl-CoA to L-homoserine, forming succinyl-L-homoserine. This chain is Homoserine O-succinyltransferase, found in Yersinia enterocolitica serotype O:8 / biotype 1B (strain NCTC 13174 / 8081).